The chain runs to 232 residues: Replicative helicase loading/DNA remodeling protein DnaD (232 aa).

The interval Met1–Ser98 is N-terminal domain. A DDBH1 region spans residues Met1–Gln116. The interval Leu99–Lys205 is C-terminal domain. The interval Thr131–Lys200 is DDBH2. Residues Phe206–Gln232 form a C-terminal tail region.

The protein belongs to the DnaB/DnaD family. The DNA replisome assembles sequentially on oriC in this order; DnaA, DnaD, DnaB, DnaI-DnaC helicase. Homodimer. Homotetramer. Oligomerization in vitro is concentration dependent. Part of the replication restart primosome which assembles in this order; PriA, DnaD then DnaB. The preferred DNA substrate mimics an arrested DNA replication fork with unreplicated lagging strand. Interacts with DnaA, DnaB and PriA. Interaction with DnaB requires DnaD to dimerize.

The protein resides in the cytoplasm. Its activity is regulated as follows. Recruitment to oriC requires DnaA but not DnaB, DnaC or DnaI and is blocked by SirA. Required to load replicative helicase DnaC onto replication forks. Binds to a DnaD recognition element (DRE) which has pairs of 5'-TnnT-3' motifs; there is a strong DRE at oriC opposite the DnaA-trios recognized by DnaA. During DNA replication from the origin of replication (oriC) in the DNA replisome, DnaD is required after DnaA, before DnaB and subsequent helicase DnaC loading. A component of the replication restart primosome, which reloads the replicative helicase on sites other than oriC. DnaB, DnaD and DnaI may also be required for a PriA-independent pathway of replication fork restart. DnaB and DnaD work together to allow DnaB access to single-stranded (ss)DNA. Has DNA remodeling activity that converts supercoiled plasmid into an open circular form; DnaD forms scaffolds inside the plasmid DNA. Plasmid relaxation incorporates both wrapping around the DnaD protein scaffold and simultaneous untwisting, no nicking of the DNA is seen. Also converts linear DNA into an open circular form. Disrupts a replicative helicase-DnaI complex. Inhibits the ability of DnaA-ATP to form a helix on DNA; does not disassemble preformed helices in vitro. Binds ssDNA, and replication fork-like substrates, supercoiled plasmid, but not stably to short double-stranded (ds)DNA. DnaD stimulates DnaB DNA-binding activities. DnaB and DnaD are required to load helicase on the repN plasmid origin of replication (oriN). Causes a severe growth defect upon overexpression even in an oriC-independent strain. The chain is Replicative helicase loading/DNA remodeling protein DnaD from Bacillus subtilis (strain 168).